Here is a 358-residue protein sequence, read N- to C-terminus: uncharacterized protein (358 aa).

Positions 39, 61, 92, 95, 98, 106, and 157 each coordinate Zn(2+).

The protein belongs to the zinc-containing alcohol dehydrogenase family. Zn(2+) serves as cofactor.

This is an uncharacterized protein from Escherichia coli (strain K12).